A 445-amino-acid chain; its full sequence is GTPase Der (445 aa).

EngA-type G domains are found at residues 3–167 and 180–353; these read PVIA…YAGE and IKIA…AAAM. GTP-binding positions include 9-16, 56-60, 119-122, 186-193, 233-237, and 298-301; these read GRPNVGKS, DTGGF, NKAE, DTAGL, and NKWD. The 85-residue stretch at 354 to 438 folds into the KH-like domain; sequence KKLPTPKLTR…PLRIEFRSST (85 aa).

This sequence belongs to the TRAFAC class TrmE-Era-EngA-EngB-Septin-like GTPase superfamily. EngA (Der) GTPase family. In terms of assembly, associates with the 50S ribosomal subunit.

Its function is as follows. GTPase that plays an essential role in the late steps of ribosome biogenesis. This chain is GTPase Der, found in Burkholderia pseudomallei (strain 1106a).